The sequence spans 96 residues: Small ribosomal subunit protein bS6 (96 aa).

The protein belongs to the bacterial ribosomal protein bS6 family.

Binds together with bS18 to 16S ribosomal RNA. The protein is Small ribosomal subunit protein bS6 of Streptococcus equi subsp. zooepidemicus (strain MGCS10565).